The following is a 206-amino-acid chain: Urease accessory protein UreG (206 aa).

A GTP-binding site is contributed by 14 to 21 (GPVGSGKT).

It belongs to the SIMIBI class G3E GTPase family. UreG subfamily. In terms of assembly, homodimer. UreD, UreF and UreG form a complex that acts as a GTP-hydrolysis-dependent molecular chaperone, activating the urease apoprotein by helping to assemble the nickel containing metallocenter of UreC. The UreE protein probably delivers the nickel.

It is found in the cytoplasm. In terms of biological role, facilitates the functional incorporation of the urease nickel metallocenter. This process requires GTP hydrolysis, probably effectuated by UreG. This is Urease accessory protein UreG from Brucella anthropi (strain ATCC 49188 / DSM 6882 / CCUG 24695 / JCM 21032 / LMG 3331 / NBRC 15819 / NCTC 12168 / Alc 37) (Ochrobactrum anthropi).